Consider the following 357-residue polypeptide: tRNA/tmRNA (uracil-C(5))-methyltransferase (357 aa).

Positions 180, 209, 214, 230, and 290 each coordinate S-adenosyl-L-methionine. The active-site Nucleophile is the C315. The active-site Proton acceptor is E349.

This sequence belongs to the class I-like SAM-binding methyltransferase superfamily. RNA M5U methyltransferase family. TrmA subfamily.

The catalysed reaction is uridine(54) in tRNA + S-adenosyl-L-methionine = 5-methyluridine(54) in tRNA + S-adenosyl-L-homocysteine + H(+). The enzyme catalyses uridine(341) in tmRNA + S-adenosyl-L-methionine = 5-methyluridine(341) in tmRNA + S-adenosyl-L-homocysteine + H(+). In terms of biological role, dual-specificity methyltransferase that catalyzes the formation of 5-methyluridine at position 54 (m5U54) in all tRNAs, and that of position 341 (m5U341) in tmRNA (transfer-mRNA). In Campylobacter jejuni subsp. jejuni serotype O:2 (strain ATCC 700819 / NCTC 11168), this protein is tRNA/tmRNA (uracil-C(5))-methyltransferase.